A 307-amino-acid polypeptide reads, in one-letter code: Lipoyl synthase (307 aa).

[4Fe-4S] cluster contacts are provided by Cys55, Cys60, Cys66, Cys81, Cys85, Cys88, and Ser292. The 215-residue stretch at 67 to 281 (WEDREATFLI…ARHAEELGFS (215 aa)) folds into the Radical SAM core domain.

The protein belongs to the radical SAM superfamily. Lipoyl synthase family. Requires [4Fe-4S] cluster as cofactor.

It is found in the cytoplasm. The enzyme catalyses [[Fe-S] cluster scaffold protein carrying a second [4Fe-4S](2+) cluster] + N(6)-octanoyl-L-lysyl-[protein] + 2 oxidized [2Fe-2S]-[ferredoxin] + 2 S-adenosyl-L-methionine + 4 H(+) = [[Fe-S] cluster scaffold protein] + N(6)-[(R)-dihydrolipoyl]-L-lysyl-[protein] + 4 Fe(3+) + 2 hydrogen sulfide + 2 5'-deoxyadenosine + 2 L-methionine + 2 reduced [2Fe-2S]-[ferredoxin]. The protein operates within protein modification; protein lipoylation via endogenous pathway; protein N(6)-(lipoyl)lysine from octanoyl-[acyl-carrier-protein]: step 2/2. Its function is as follows. Catalyzes the radical-mediated insertion of two sulfur atoms into the C-6 and C-8 positions of the octanoyl moiety bound to the lipoyl domains of lipoate-dependent enzymes, thereby converting the octanoylated domains into lipoylated derivatives. The protein is Lipoyl synthase of Mycolicibacterium paratuberculosis (strain ATCC BAA-968 / K-10) (Mycobacterium paratuberculosis).